We begin with the raw amino-acid sequence, 462 residues long: MDKKQLLRNLPKIDELLKEEIINRYLQENSRTLVVDSLRQSIDHYRGEILKNNIDSFTRENVVNYFIDTLEENKSTKFKKVINATGVVIHTNLGRSLLAKEAIENVVKVSENYSNLEYDLRKGKRGSRYSHVEELIKKVTGAEAAMVVNNNAAAVMLALNTLCEEREAIVSRGQLVEIGGSFRVPDVMKFSRAHLVEVGTTNRTHLYDYENNINENTGVLLKVHTSNFKIMGFTEEVSSEEMVQLGEKYKLPVMEDIGSGTLVDFSKYGFTYEPTVQSSLEKGVDVVTFSGDKMLGGPQAGIIVGKKKYIDKMKKNQLTRALRIDKMTLAALEGTLKCYIDEKEAIENIPTLNMILSSKDIHKKRAQRLKRRLQNNVKDFNFKVSEDLSMVGGGSMPGERIPTYVVKVNSDKITAEKIEEKLRLSKDPIIVRVSKDEVILDVRTLFERDFNIIVEEFKKLLK.

Lysine 293 is subject to N6-(pyridoxal phosphate)lysine.

Belongs to the SelA family. Requires pyridoxal 5'-phosphate as cofactor.

Its subcellular location is the cytoplasm. The catalysed reaction is L-seryl-tRNA(Sec) + selenophosphate + H(+) = L-selenocysteinyl-tRNA(Sec) + phosphate. It participates in aminoacyl-tRNA biosynthesis; selenocysteinyl-tRNA(Sec) biosynthesis; selenocysteinyl-tRNA(Sec) from L-seryl-tRNA(Sec) (bacterial route): step 1/1. Functionally, converts seryl-tRNA(Sec) to selenocysteinyl-tRNA(Sec) required for selenoprotein biosynthesis. The chain is L-seryl-tRNA(Sec) selenium transferase from Clostridium botulinum (strain 657 / Type Ba4).